A 338-amino-acid polypeptide reads, in one-letter code: CRISPR-associated endonuclease Cas1 (338 aa).

Residues E165, H230, and E245 each contribute to the Mn(2+) site.

The protein belongs to the CRISPR-associated endonuclease Cas1 family. In terms of assembly, homodimer, forms a heterotetramer with a Cas2 homodimer. Requires Mg(2+) as cofactor. Mn(2+) serves as cofactor.

CRISPR (clustered regularly interspaced short palindromic repeat), is an adaptive immune system that provides protection against mobile genetic elements (viruses, transposable elements and conjugative plasmids). CRISPR clusters contain spacers, sequences complementary to antecedent mobile elements, and target invading nucleic acids. CRISPR clusters are transcribed and processed into CRISPR RNA (crRNA). Acts as a dsDNA endonuclease. Involved in the integration of spacer DNA into the CRISPR cassette. This is CRISPR-associated endonuclease Cas1 from Fusobacterium nucleatum subsp. nucleatum (strain ATCC 25586 / DSM 15643 / BCRC 10681 / CIP 101130 / JCM 8532 / KCTC 2640 / LMG 13131 / VPI 4355).